Here is a 198-residue protein sequence, read N- to C-terminus: Glycerol-3-phosphate acyltransferase 2 (198 aa).

4 helical membrane passes run 4-24 (TYLLFIVAYLLGSIPFALVVG), 71-91 (LPIIFALDIHPLWFGLAAVLG), 113-133 (LLCYSPVVFAILAVVFFSLLF), and 147-167 (VVAVIASIVSGDKIFIIAMCL).

The protein belongs to the PlsY family. In terms of assembly, probably interacts with PlsX.

Its subcellular location is the cell membrane. The enzyme catalyses an acyl phosphate + sn-glycerol 3-phosphate = a 1-acyl-sn-glycero-3-phosphate + phosphate. Its pathway is lipid metabolism; phospholipid metabolism. Catalyzes the transfer of an acyl group from acyl-phosphate (acyl-PO(4)) to glycerol-3-phosphate (G3P) to form lysophosphatidic acid (LPA). This enzyme utilizes acyl-phosphate as fatty acyl donor, but not acyl-CoA or acyl-ACP. The protein is Glycerol-3-phosphate acyltransferase 2 of Bacillus cereus (strain ATCC 10987 / NRS 248).